The chain runs to 282 residues: Elongation factor Ts (282 aa).

The segment at 80 to 83 (TDFV) is involved in Mg(2+) ion dislocation from EF-Tu.

The protein belongs to the EF-Ts family.

The protein resides in the cytoplasm. In terms of biological role, associates with the EF-Tu.GDP complex and induces the exchange of GDP to GTP. It remains bound to the aminoacyl-tRNA.EF-Tu.GTP complex up to the GTP hydrolysis stage on the ribosome. In Pasteurella multocida (strain Pm70), this protein is Elongation factor Ts (tsf).